The following is a 432-amino-acid chain: Enolase (432 aa).

Gln-167 provides a ligand contact to (2R)-2-phosphoglycerate. Glu-209 functions as the Proton donor in the catalytic mechanism. Residues Asp-246, Glu-290, and Asp-317 each coordinate Mg(2+). The (2R)-2-phosphoglycerate site is built by Lys-342, Arg-371, Ser-372, and Lys-393. Lys-342 serves as the catalytic Proton acceptor.

Belongs to the enolase family. In terms of assembly, component of the RNA degradosome, a multiprotein complex involved in RNA processing and mRNA degradation. Requires Mg(2+) as cofactor.

The protein resides in the cytoplasm. The protein localises to the secreted. Its subcellular location is the cell surface. The enzyme catalyses (2R)-2-phosphoglycerate = phosphoenolpyruvate + H2O. It functions in the pathway carbohydrate degradation; glycolysis; pyruvate from D-glyceraldehyde 3-phosphate: step 4/5. Its function is as follows. Catalyzes the reversible conversion of 2-phosphoglycerate (2-PG) into phosphoenolpyruvate (PEP). It is essential for the degradation of carbohydrates via glycolysis. This chain is Enolase, found in Klebsiella pneumoniae (strain 342).